We begin with the raw amino-acid sequence, 430 residues long: Histidinol dehydrogenase (430 aa).

NAD(+) is bound by residues Tyr131, Gln192, and Asn215. Positions 238, 260, and 263 each coordinate substrate. Residues Gln260 and His263 each contribute to the Zn(2+) site. Residues Glu328 and His329 each act as proton acceptor in the active site. The substrate site is built by His329, Asp362, Glu416, and His421. Asp362 is a binding site for Zn(2+). A Zn(2+)-binding site is contributed by His421.

This sequence belongs to the histidinol dehydrogenase family. Requires Zn(2+) as cofactor.

The enzyme catalyses L-histidinol + 2 NAD(+) + H2O = L-histidine + 2 NADH + 3 H(+). It participates in amino-acid biosynthesis; L-histidine biosynthesis; L-histidine from 5-phospho-alpha-D-ribose 1-diphosphate: step 9/9. Its function is as follows. Catalyzes the sequential NAD-dependent oxidations of L-histidinol to L-histidinaldehyde and then to L-histidine. The protein is Histidinol dehydrogenase of Acinetobacter baylyi (strain ATCC 33305 / BD413 / ADP1).